The sequence spans 599 residues: Purine-uracil permease NCS1 (599 aa).

The next 12 membrane-spanning stretches (helical) occupy residues 140–160 (LWIGLVVGVPTYYLAGSLVDL), 164–184 (WWQGIATVVTANLILLVPLVL), 218–238 (LVGCGWYGIETWIGGEAIFLL), 257–277 (TSPLEFSCFIVFWLAQLCIVW), 293–313 (ILISLTSCLLAWSYLKAGGFG), 327–347 (FWTLFFPSLTANISFWATLAL), 363–383 (IIGQVGLPVFMGLFTFVGVAV), 411–433 (TLLAIVGISLATLTTNIAANVVA), 445–465 (FFTFGRGAFLTAVLGIVFQPW), 474–494 (FVYTWLIGYSALLGPIGGIIL), 525–545 (YNVAAVVALVAGIIPVVPGFL), and 560–580 (VVYDNALFFSFIIAGFVYWII).

The protein belongs to the purine-cytosine permease (2.A.39) family. Expressed in roots, leaves, stems, flowers, siliques and seeds.

The protein resides in the plastid. The protein localises to the chloroplast envelope. It is found in the chloroplast membrane. Nucleobase-proton symporter that facilitates the uptake of nucleobases in the cells. Can transport adenine, guanine and uracil. Contributes to uracil import into plastids for plastidic uracil salvage which is essential for plant growth and development. This chain is Purine-uracil permease NCS1, found in Arabidopsis thaliana (Mouse-ear cress).